Reading from the N-terminus, the 410-residue chain is Heat stress transcription factor A-9 (410 aa).

Residues 1–44 (MGSKKRSPQHPAAAAPPPAVGGGGGGEVSGDGGASTANGPVVPK) are disordered. Gly residues predominate over residues 20 to 33 (VGGGGGGEVSGDGG). Positions 171–246 (GLEKEVETLK…QLVQQQQQQR (76 aa)) form a coiled coil. Residues 179-229 (LKRDKALLMQQLVDLRHYQQTSNLEVQNLIERLQVMEQNQQQMMALLAIVV) are hydrophobic repeat HR-A/B. The Nuclear localization signal motif lies at 256-260 (SKKRR). A Nuclear export signal motif is present at residues 279–290 (AHIVEYLPPVPE).

This sequence belongs to the HSF family. Class A subfamily. As to quaternary structure, homotrimer. In terms of processing, exhibits temperature-dependent phosphorylation.

Its subcellular location is the cytoplasm. The protein resides in the nucleus. Transcriptional regulator that specifically binds DNA of heat shock promoter elements (HSE). The protein is Heat stress transcription factor A-9 (HSFA9) of Oryza sativa subsp. japonica (Rice).